Consider the following 327-residue polypeptide: Zinc transport protein ZntB (327 aa).

Topologically, residues 1 to 271 (MDVVEGKALQ…AMNRRTYTMS (271 aa)) are cytoplasmic. The helical transmembrane segment at 272–292 (LLAMVFLPTTFLTGLFGVNLG) threads the bilayer. At 293 to 300 (GIPGNTDA) the chain is on the periplasmic side. The chain crosses the membrane as a helical span at residues 301–321 (FGFTIFCMMLVVLVLSVAWWL). At 322–327 (KRSKWL) the chain is on the cytoplasmic side.

The protein belongs to the CorA metal ion transporter (MIT) (TC 1.A.35) family.

The protein resides in the cell inner membrane. The enzyme catalyses Zn(2+)(out) + H(+)(out) = Zn(2+)(in) + H(+)(in). Its function is as follows. Zinc transporter. Acts as a Zn(2+):proton symporter, which likely mediates zinc ion uptake. The sequence is that of Zinc transport protein ZntB from Yersinia pseudotuberculosis serotype O:1b (strain IP 31758).